We begin with the raw amino-acid sequence, 102 residues long: Large ribosomal subunit protein bL28 (102 aa).

Residues 1–20 (MSNSCDLTGHGWQNGNMVSH) show a composition bias toward polar residues. The disordered stretch occupies residues 1-27 (MSNSCDLTGHGWQNGNMVSHSNRKTKK).

It belongs to the bacterial ribosomal protein bL28 family.

This Neorickettsia sennetsu (strain ATCC VR-367 / Miyayama) (Ehrlichia sennetsu) protein is Large ribosomal subunit protein bL28.